Reading from the N-terminus, the 496-residue chain is Ankyrin repeat domain-containing protein 34A (496 aa).

ANK repeat units lie at residues 4–33, 37–72, 76–106, and 110–139; these read TEGH…YVNE, QGET…DPNI, LGRT…DPSV, and AGAS…AKGT. Glutamine 15 is subject to N5-methylglutamine. Composition is skewed to polar residues over residues 147-162 and 180-191; these read DTSP…YLNS and FCTSPSEIQLQT. Residues 147–473 form a disordered region; sequence DTSPSGTKKT…TKRKLVRRHS (327 aa). Basic and acidic residues predominate over residues 204 to 214; that stretch reads AQEEEEKRDVF. Residues 218 to 233 are compositionally biased toward pro residues; sequence LPKPPDDPSPSEPLPK. The span at 234 to 243 shows a compositional bias: basic residues; that stretch reads PPRHPPKPLK. Threonine 316 carries the phosphothreonine modification. The segment covering 463–473 has biased composition (basic residues); sequence RTKRKLVRRHS.

Belongs to the ANKRD34 family. In terms of processing, methylated at Gln-15 by N6AMT1.

The chain is Ankyrin repeat domain-containing protein 34A (ANKRD34A) from Homo sapiens (Human).